The chain runs to 332 residues: Endonuclease 8-like 2 (332 aa).

P2 functions as the Schiff-base intermediate with DNA in the catalytic mechanism. E3 acts as the Proton donor in catalysis. K50 (proton donor; for beta-elimination activity) is an active-site residue. An N6-acetyllysine modification is found at K50. The interval 59–121 (DEEMGPPGSS…EDDSEYLERD (63 aa)) is disordered. S68 carries the phosphoserine modification. Over residues 74–84 (PQKEVQKEGAA) the composition is skewed to basic and acidic residues. Residues 94-104 (GQKTLDGSSRS) show a composition bias toward polar residues. The residue at position 154 (K154) is an N6-acetyllysine. Residue N231 coordinates DNA. The segment at 284–320 (QVYQKEQCPAGHQVMKEAFGPEDGLQRLTWWCPQCQP) adopts an FPG-type zinc-finger fold. The active-site Proton donor; for delta-elimination activity is the R310.

It belongs to the FPG family. As to quaternary structure, binds EP300. As to expression, detected in testis, skeletal muscle, heart, brain, placenta, lung, pancreas, kidney and liver.

Its subcellular location is the nucleus. It carries out the reaction 2'-deoxyribonucleotide-(2'-deoxyribose 5'-phosphate)-2'-deoxyribonucleotide-DNA = a 3'-end 2'-deoxyribonucleotide-(2,3-dehydro-2,3-deoxyribose 5'-phosphate)-DNA + a 5'-end 5'-phospho-2'-deoxyribonucleoside-DNA + H(+). With respect to regulation, acetylation of Lys-50 leads to loss of DNA nicking activity. Acetylation of Lys-154 has no effect. Functionally, involved in base excision repair of DNA damaged by oxidation or by mutagenic agents. Has DNA glycosylase activity towards 5-hydroxyuracil and other oxidized derivatives of cytosine with a preference for mismatched double-stranded DNA (DNA bubbles). Has low or no DNA glycosylase activity towards thymine glycol, 2-hydroxyadenine, hypoxanthine and 8-oxoguanine. Has AP (apurinic/apyrimidinic) lyase activity and introduces nicks in the DNA strand. Cleaves the DNA backbone by beta-delta elimination to generate a single-strand break at the site of the removed base with both 3'- and 5'-phosphates. The chain is Endonuclease 8-like 2 (NEIL2) from Homo sapiens (Human).